Reading from the N-terminus, the 219-residue chain is Ribose-5-phosphate isomerase A (219 aa).

Residues 28-31 (TGST), 81-84 (DGAD), and 94-97 (KGGG) contribute to the substrate site. Glu-103 functions as the Proton acceptor in the catalytic mechanism. Substrate is bound at residue Lys-121.

It belongs to the ribose 5-phosphate isomerase family. In terms of assembly, homodimer.

It catalyses the reaction aldehydo-D-ribose 5-phosphate = D-ribulose 5-phosphate. It participates in carbohydrate degradation; pentose phosphate pathway; D-ribose 5-phosphate from D-ribulose 5-phosphate (non-oxidative stage): step 1/1. In terms of biological role, catalyzes the reversible conversion of ribose-5-phosphate to ribulose 5-phosphate. The chain is Ribose-5-phosphate isomerase A from Shewanella frigidimarina (strain NCIMB 400).